We begin with the raw amino-acid sequence, 234 residues long: uncharacterized protein (234 aa).

A disordered region spans residues 65–89 (QNANRQEGRRRGLRPSSDGNLRREN). An RING-type zinc finger spans residues 185–220 (CAVCLHNKVCVLFQKCKHVITCGPCSLRIKECPVCK).

It belongs to the IIV-6 175R/332L family.

This is an uncharacterized protein from Acheta domesticus (House cricket).